Reading from the N-terminus, the 527-residue chain is Probable protein kinase UbiB (527 aa).

A Protein kinase domain is found at 123–527; sequence EFNETALASA…AIWLLIYLLS (405 aa). Residues 129-137 and lysine 161 contribute to the ATP site; that span reads LASASIAQV. Catalysis depends on aspartate 296, which acts as the Proton acceptor. Residues 506-526 form a helical membrane-spanning segment; it reads FTSFILGLCTGLAIWLLIYLL.

Belongs to the ABC1 family. UbiB subfamily.

The protein resides in the cell inner membrane. It functions in the pathway cofactor biosynthesis; ubiquinone biosynthesis [regulation]. Is probably a protein kinase regulator of UbiI activity which is involved in aerobic coenzyme Q (ubiquinone) biosynthesis. This Pasteurella multocida (strain Pm70) protein is Probable protein kinase UbiB.